A 382-amino-acid polypeptide reads, in one-letter code: Alanine racemase (382 aa).

Lys37 (proton acceptor; specific for D-alanine) is an active-site residue. Lys37 is subject to N6-(pyridoxal phosphate)lysine. Arg135 contributes to the substrate binding site. Tyr267 (proton acceptor; specific for L-alanine) is an active-site residue. Met315 is a binding site for substrate.

This sequence belongs to the alanine racemase family. It depends on pyridoxal 5'-phosphate as a cofactor.

It catalyses the reaction L-alanine = D-alanine. It participates in amino-acid biosynthesis; D-alanine biosynthesis; D-alanine from L-alanine: step 1/1. Catalyzes the interconversion of L-alanine and D-alanine. May also act on other amino acids. This is Alanine racemase (alr) from Geobacter sulfurreducens (strain ATCC 51573 / DSM 12127 / PCA).